Reading from the N-terminus, the 365-residue chain is Eukaryotic translation initiation factor 3 subunit H (365 aa).

The MPN domain occupies 11–160 (VKVEALVVMK…LRAFRLSPKF (150 aa)).

This sequence belongs to the eIF-3 subunit H family. As to quaternary structure, component of the eukaryotic translation initiation factor 3 (eIF-3) complex.

The protein resides in the cytoplasm. Functionally, component of the eukaryotic translation initiation factor 3 (eIF-3) complex, which is involved in protein synthesis of a specialized repertoire of mRNAs and, together with other initiation factors, stimulates binding of mRNA and methionyl-tRNAi to the 40S ribosome. The eIF-3 complex specifically targets and initiates translation of a subset of mRNAs involved in cell proliferation. The chain is Eukaryotic translation initiation factor 3 subunit H from Aspergillus terreus (strain NIH 2624 / FGSC A1156).